The following is a 272-amino-acid chain: S-adenosylmethionine decarboxylase proenzyme (272 aa).

The active-site Schiff-base intermediate with substrate; via pyruvic acid is the S117. S117 carries the pyruvic acid (Ser); by autocatalysis modification. The active-site Proton acceptor; for processing activity is H122. C145 serves as the catalytic Proton donor; for catalytic activity.

This sequence belongs to the prokaryotic AdoMetDC family. Type 2 subfamily. As to quaternary structure, heterooctamer of four alpha and four beta chains arranged as a tetramer of alpha/beta heterodimers. The cofactor is pyruvate. In terms of processing, is synthesized initially as an inactive proenzyme. Formation of the active enzyme involves a self-maturation process in which the active site pyruvoyl group is generated from an internal serine residue via an autocatalytic post-translational modification. Two non-identical subunits are generated from the proenzyme in this reaction, and the pyruvate is formed at the N-terminus of the alpha chain, which is derived from the carboxyl end of the proenzyme. The post-translation cleavage follows an unusual pathway, termed non-hydrolytic serinolysis, in which the side chain hydroxyl group of the serine supplies its oxygen atom to form the C-terminus of the beta chain, while the remainder of the serine residue undergoes an oxidative deamination to produce ammonia and the pyruvoyl group blocking the N-terminus of the alpha chain.

It carries out the reaction S-adenosyl-L-methionine + H(+) = S-adenosyl 3-(methylsulfanyl)propylamine + CO2. It participates in amine and polyamine biosynthesis; S-adenosylmethioninamine biosynthesis; S-adenosylmethioninamine from S-adenosyl-L-methionine: step 1/1. Catalyzes the decarboxylation of S-adenosylmethionine to S-adenosylmethioninamine (dcAdoMet), the propylamine donor required for the synthesis of the polyamines spermine and spermidine from the diamine putrescine. The polypeptide is S-adenosylmethionine decarboxylase proenzyme (Halorhodospira halophila (strain DSM 244 / SL1) (Ectothiorhodospira halophila (strain DSM 244 / SL1))).